The primary structure comprises 400 residues: Protection of telomeres homolog 1 (400 aa).

This sequence belongs to the telombin family. In terms of tissue distribution, expressed in sperm and oocytes.

The protein resides in the nucleus. It localises to the nucleus envelope. Its subcellular location is the chromosome. It is found in the telomere. Telomeric DNA-binding protein, which binds to single-stranded C-rich repeat sequences, with high specificity to the 5'-GCCTAA-3' sequence. Repeat sequence binding can be at the 5' or 3' telomeric end. May have a role in protecting the 5' end of the C-rich strand of the telomere. Acts redundantly with pot-2 to negatively regulate telomerase-mediated telomere extension. Also regulates telomere length by the telomerase-independent telomere maintenance pathway called ALT (alternative lengthening of telomeres). Through sun-1, anchors telomeres to the nuclear envelope in embryos. This Caenorhabditis elegans protein is Protection of telomeres homolog 1.